The sequence spans 409 residues: Arginine deiminase (409 aa).

Residue Cys-398 is the Amidino-cysteine intermediate of the active site.

The protein belongs to the arginine deiminase family.

The protein resides in the cytoplasm. The enzyme catalyses L-arginine + H2O = L-citrulline + NH4(+). Its pathway is amino-acid degradation; L-arginine degradation via ADI pathway; carbamoyl phosphate from L-arginine: step 1/2. This chain is Arginine deiminase, found in Metamycoplasma arthritidis (strain 158L3-1) (Mycoplasma arthritidis).